We begin with the raw amino-acid sequence, 490 residues long: Mitochondrial-processing peptidase subunit beta (490 aa).

The N-terminal 46 residues, 1-46 (MAAAAVARAVLFSAARRRLCGFTERLLIGGAAGRSLYFGGNRLRST), are a transit peptide targeting the mitochondrion. Position 102 (His-102) interacts with Zn(2+). The active-site Proton acceptor is Glu-105. Zn(2+)-binding residues include His-106 and Glu-182.

It belongs to the peptidase M16 family. Heterodimer of PMPCA (alpha) and PMPCB (beta) subunits, forming the mitochondrial processing protease (MPP) in which PMPCA is involved in substrate recognition and binding and PMPCB is the catalytic subunit. Zn(2+) serves as cofactor.

The protein localises to the mitochondrion matrix. The catalysed reaction is Release of N-terminal transit peptides from precursor proteins imported into the mitochondrion, typically with Arg in position P2.. Its activity is regulated as follows. Binding to PMPCA is required for catalytic activity. Functionally, catalytic subunit of the essential mitochondrial processing protease (MPP), which cleaves the mitochondrial sequence off newly imported precursors proteins. Preferentially, cleaves after an arginine at position P2. Required for PINK1 turnover by coupling PINK1 mitochondrial import and cleavage, which results in subsequent PINK1 proteolysis. This chain is Mitochondrial-processing peptidase subunit beta (PMPCB), found in Bos taurus (Bovine).